The chain runs to 505 residues: Catalase (505 aa).

Residues His58 and Asn131 contribute to the active site. Tyr341 contacts heme.

It belongs to the catalase family. Requires heme as cofactor.

The catalysed reaction is 2 H2O2 = O2 + 2 H2O. Its function is as follows. Decomposes hydrogen peroxide into water and oxygen; serves to protect cells from the toxic effects of hydrogen peroxide. The polypeptide is Catalase (kat) (Methanosarcina barkeri (strain Fusaro / DSM 804)).